We begin with the raw amino-acid sequence, 206 residues long: Large ribosomal subunit protein mL40 (206 aa).

Residues 1 to 46 (MATGVMLCAARALRPRSWIPGTCQAHVRHTHQRASLLAFWDLIPMR) constitute a mitochondrion transit peptide. The segment at 170-189 (PFEKEGPHYTPPISNYQAPE) is disordered.

This sequence belongs to the mitochondrion-specific ribosomal protein mL40 family. In terms of assembly, component of the mitochondrial ribosome large subunit (39S) which comprises a 16S rRNA and about 50 distinct proteins. Ubiquitous.

The protein resides in the mitochondrion. This chain is Large ribosomal subunit protein mL40 (Mrpl40), found in Mus musculus (Mouse).